A 559-amino-acid chain; its full sequence is DNA primase (559 aa).

The CHC2-type zinc-finger motif lies at 37-61; sequence CPFHEERSASFSVNQVKGFYYCFGC. Residues 246-327 enclose the Toprim domain; it reads KQVIVTEGYL…KGGVILFENN (82 aa). Mg(2+) contacts are provided by Glu-252, Asp-296, and Asp-298.

The protein belongs to the DnaG primase family. Monomer. Interacts with DnaB. Zn(2+) serves as cofactor. Requires Mg(2+) as cofactor.

The enzyme catalyses ssDNA + n NTP = ssDNA/pppN(pN)n-1 hybrid + (n-1) diphosphate.. Functionally, RNA polymerase that catalyzes the synthesis of short RNA molecules used as primers for DNA polymerase during DNA replication. The protein is DNA primase of Helicobacter pylori (strain J99 / ATCC 700824) (Campylobacter pylori J99).